Consider the following 62-residue polypeptide: Photosystem II reaction center protein Z (62 aa).

2 helical membrane-spanning segments follow: residues Ala-8 to Ala-28 and Phe-41 to Ile-61.

It belongs to the PsbZ family. As to quaternary structure, PSII is composed of 1 copy each of membrane proteins PsbA, PsbB, PsbC, PsbD, PsbE, PsbF, PsbH, PsbI, PsbJ, PsbK, PsbL, PsbM, PsbT, PsbY, PsbZ, Psb30/Ycf12, at least 3 peripheral proteins of the oxygen-evolving complex and a large number of cofactors. It forms dimeric complexes.

It localises to the plastid. It is found in the chloroplast thylakoid membrane. In terms of biological role, may control the interaction of photosystem II (PSII) cores with the light-harvesting antenna, regulates electron flow through the 2 photosystem reaction centers. PSII is a light-driven water plastoquinone oxidoreductase, using light energy to abstract electrons from H(2)O, generating a proton gradient subsequently used for ATP formation. This is Photosystem II reaction center protein Z from Daucus carota (Wild carrot).